Here is a 433-residue protein sequence, read N- to C-terminus: Phosphoglycerate kinase, chloroplastic (433 aa).

The transit peptide at 1 to 28 directs the protein to the chloroplast; it reads GASFSLHVLSKINSYKSQSTKPIRGVAS. (2R)-3-phosphoglycerate contacts are provided by A51, D52, N54, R68, S90, H91, G93, R94, R149, H181, and R182. G227 contributes to the ADP binding site. G227 contributes to the CDP binding site. Residues K229 and K233 each contribute to the AMP site. ATP is bound at residue K233. Residue G251 participates in ADP binding. G251 is a CDP binding site. AMP contacts are provided by G252 and G324. ATP is bound by residues G252 and G324. The CDP site is built by G349 and F354. Position 354 (F354) interacts with ADP. Position 355 (E355) interacts with AMP. Residues E355, D386, and S387 each coordinate ATP. A Mg(2+)-binding site is contributed by D386.

The protein belongs to the phosphoglycerate kinase family. As to quaternary structure, monomer. Mg(2+) serves as cofactor.

Its subcellular location is the plastid. The protein localises to the chloroplast. The enzyme catalyses (2R)-3-phosphoglycerate + ATP = (2R)-3-phospho-glyceroyl phosphate + ADP. It functions in the pathway carbohydrate biosynthesis; Calvin cycle. In Spinacia oleracea (Spinach), this protein is Phosphoglycerate kinase, chloroplastic.